A 273-amino-acid polypeptide reads, in one-letter code: Dermonecrotic toxin LruSicTox-alphaIC1b (273 aa).

His-5 is an active-site residue. The Mg(2+) site is built by Glu-25 and Asp-27. The Nucleophile role is filled by His-41. 2 cysteine pairs are disulfide-bonded: Cys-45-Cys-51 and Cys-47-Cys-190. Asp-85 serves as a coordination point for Mg(2+).

The protein belongs to the arthropod phospholipase D family. Class II subfamily. The cofactor is Mg(2+). In terms of tissue distribution, expressed by the venom gland.

The protein localises to the secreted. It carries out the reaction an N-(acyl)-sphingosylphosphocholine = an N-(acyl)-sphingosyl-1,3-cyclic phosphate + choline. The catalysed reaction is an N-(acyl)-sphingosylphosphoethanolamine = an N-(acyl)-sphingosyl-1,3-cyclic phosphate + ethanolamine. It catalyses the reaction a 1-acyl-sn-glycero-3-phosphocholine = a 1-acyl-sn-glycero-2,3-cyclic phosphate + choline. The enzyme catalyses a 1-acyl-sn-glycero-3-phosphoethanolamine = a 1-acyl-sn-glycero-2,3-cyclic phosphate + ethanolamine. Its function is as follows. Dermonecrotic toxins cleave the phosphodiester linkage between the phosphate and headgroup of certain phospholipids (sphingolipid and lysolipid substrates), forming an alcohol (often choline) and a cyclic phosphate. This toxin acts on sphingomyelin (SM). It may also act on ceramide phosphoethanolamine (CPE), lysophosphatidylcholine (LPC) and lysophosphatidylethanolamine (LPE), but not on lysophosphatidylserine (LPS), and lysophosphatidylglycerol (LPG). It acts by transphosphatidylation, releasing exclusively cyclic phosphate products as second products. Induces dermonecrosis, hemolysis, increased vascular permeability, edema, inflammatory response, and platelet aggregation. This chain is Dermonecrotic toxin LruSicTox-alphaIC1b, found in Loxosceles rufescens (Mediterranean recluse spider).